Consider the following 448-residue polypeptide: Glucan 1,3-beta-glucosidase I/II (448 aa).

The N-terminal stretch at 1–19 (MLSLKTLLCTLLTVSSVLA) is a signal peptide. Residues 20–40 (TPVPARDPSSIQFVHEENKKR) constitute a propeptide that is removed on maturation. Asparagine 165 carries an N-linked (GlcNAc...) asparagine glycan. Residue glutamate 232 is the Proton donor of the active site. A glycan (N-linked (GlcNAc...) asparagine) is linked at asparagine 325. Glutamate 334 acts as the Nucleophile in catalysis.

The protein belongs to the glycosyl hydrolase 5 (cellulase A) family.

The protein resides in the secreted. Its subcellular location is the cell wall. It carries out the reaction Successive hydrolysis of beta-D-glucose units from the non-reducing ends of (1-&gt;3)-beta-D-glucans, releasing alpha-glucose.. Its function is as follows. Glucanases possibly play a role in cell expansion during growth, in cell-cell fusion during mating, and in spore release during sporulation. This enzyme hydrolyzes both 1,3-beta- and 1,6-beta-linkages and even has beta-glucosidase activity. It could also function biosynthetically as a transglycosylase. The sequence is that of Glucan 1,3-beta-glucosidase I/II (EXG1) from Saccharomyces cerevisiae (strain ATCC 204508 / S288c) (Baker's yeast).